An 89-amino-acid chain; its full sequence is Small ribosomal subunit protein uS19 (89 aa).

It belongs to the universal ribosomal protein uS19 family.

Protein S19 forms a complex with S13 that binds strongly to the 16S ribosomal RNA. In Xanthomonas axonopodis pv. citri (strain 306), this protein is Small ribosomal subunit protein uS19.